The primary structure comprises 353 residues: Peroxisome assembly protein 12-B (353 aa).

Topologically, residues 1–19 (MAERGAHITTTSPLDDRPS) are peroxisomal matrix. The chain crosses the membrane as a helical span at residues 20 to 47 (IFEVVAQESLMAAARPALHHIVKVLAES). Topologically, residues 48–51 (NPAR) are cytoplasmic. The chain crosses the membrane as a helical span at residues 52–76 (YGTLWRWFDELYTLLECLLQQHYLS). Over 77-104 (WASASFSENFYGLKRVTLGKQVGQRNLA) the chain is Peroxisomal matrix. The helical transmembrane segment at 105–134 (RKEYWKSLLLLVLIPYLRIKLEKLVNSLRE) threads the bilayer. Residues 135 to 139 (EEDYS) are Cytoplasmic-facing. Residues 140–178 (IQNPTSFHKRCYKAILASYPFLKLGWEAWFLFYQLRYIL) traverse the membrane as a helical segment. At 179 to 243 (WNGKHHSPLL…LGAVTLSVSS (65 aa)) the chain is on the peroxisomal matrix side. The chain crosses the membrane as a helical span at residues 244-271 (SLSLGVFFLQFLDWWYSAENRETLKSLG). Over 272-353 (NLPVPPPPIH…HLIKLYTPDG (82 aa)) the chain is Cytoplasmic. Zn(2+) is bound by residues C298, C301, C319, and C322. The RING-type; degenerate zinc finger occupies 298-337 (CPLCRKVRVNDTALGTSGYVFCYRCAYYYVKTHQRCPVSG).

The protein belongs to the pex2/pex10/pex12 family. As to quaternary structure, component of the PEX2-PEX10-PEX12 retrotranslocation channel.

Its subcellular location is the peroxisome membrane. It participates in protein modification; protein ubiquitination. Component of a retrotranslocation channel required for peroxisome organization by mediating export of the PEX5 receptor from peroxisomes to the cytosol, thereby promoting PEX5 recycling. The retrotranslocation channel is composed of PEX2, PEX10 and PEX12; each subunit contributing transmembrane segments that coassemble into an open channel that specifically allows the passage of PEX5 through the peroxisomal membrane. PEX12 also regulates PEX5 recycling by activating the E3 ubiquitin-protein ligase activity of PEX10. When PEX5 recycling is compromised, PEX12 stimulates PEX10-mediated polyubiquitination of PEX5, leading to its subsequent degradation. The protein is Peroxisome assembly protein 12-B of Xenopus laevis (African clawed frog).